The following is a 936-amino-acid chain: Protein SIEL (936 aa).

In terms of assembly, interacts with SHR, MGP, SCR, JKD, CPC, TMO7 and AGL21, but not with LFY or STM.

The protein resides in the nucleus. Its subcellular location is the endosome. The protein localises to the cytoplasm. It localises to the cell cortex. Functionally, intracellular shuttle that promotes movement of SHR from the stele into the endodermis. Required for SHR association to endosomes and localization, and for intercellular movement of SHR. In Arabidopsis thaliana (Mouse-ear cress), this protein is Protein SIEL.